The sequence spans 289 residues: 4-hydroxybenzoate octaprenyltransferase (289 aa).

Helical transmembrane passes span 33–53 (LWAL…AVFV), 99–119 (LFVV…TMTI), 141–161 (LPQV…FAAV), 163–183 (ESVP…AVAY), 213–233 (LIIG…GRLN), 238–258 (EFYW…KLIV), and 268–288 (AFLN…MSYW).

This sequence belongs to the UbiA prenyltransferase family. Requires Mg(2+) as cofactor.

It localises to the cell inner membrane. It catalyses the reaction all-trans-octaprenyl diphosphate + 4-hydroxybenzoate = 4-hydroxy-3-(all-trans-octaprenyl)benzoate + diphosphate. It participates in cofactor biosynthesis; ubiquinone biosynthesis. Functionally, catalyzes the prenylation of para-hydroxybenzoate (PHB) with an all-trans polyprenyl group. Mediates the second step in the final reaction sequence of ubiquinone-8 (UQ-8) biosynthesis, which is the condensation of the polyisoprenoid side chain with PHB, generating the first membrane-bound Q intermediate 3-octaprenyl-4-hydroxybenzoate. In Enterobacter sp. (strain 638), this protein is 4-hydroxybenzoate octaprenyltransferase.